The chain runs to 182 residues: Organic solute transporter subunit beta (182 aa).

The N-terminal stretch at 1-20 is a signal peptide; the sequence is MSGLLKYLFGCFILCLLLQG. At 21 to 64 the chain is on the extracellular side; sequence KTHMTSATISKPHETIDIEKQNMTGERNSTLAQQLSFPMEDPTN. Residues Asn-42 and Asn-48 are each glycosylated (N-linked (GlcNAc...) asparagine). A helical transmembrane segment spans residues 65-85; the sequence is WNYAILALAFVVLFLAFLILA. Residues 86–182 are Cytoplasmic-facing; sequence QNSRANRTRK…LYTDSKEDDV (97 aa).

It belongs to the OST-beta family. Interacts with slc51a. The Ost-alpha/Ost-beta complex is a heterodimer composed of alpha (slc51a) and beta (slc51b) subunit; may induce the transport of slc51a from the endoplasmic reticulum to the plasma membrane. Expressed in liver.

It localises to the cell membrane. Functionally, essential component of the Ost-alpha/Ost-beta complex, a heterodimer that acts as the intestinal basolateral transporter responsible for bile acid export from enterocytes into portal blood. Efficiently transports the major species of bile acids. May modulate slc51a glycosylation, membrane trafficking and stability activities. Able to transport taurocholate, estrone sulfate, digoxin, and prostaglandin E(2), but not p-aminohippurate or S-dinitrophenyl glutathione. The sequence is that of Organic solute transporter subunit beta (slc51b) from Leucoraja erinaceus (Little skate).